The sequence spans 226 residues: Biosynthetic peptidoglycan transglycosylase (226 aa).

A helical membrane pass occupies residues 5–25 (IGVTVLAVVGLLLLPYLLTPL).

Belongs to the glycosyltransferase 51 family.

It localises to the cell inner membrane. The enzyme catalyses [GlcNAc-(1-&gt;4)-Mur2Ac(oyl-L-Ala-gamma-D-Glu-L-Lys-D-Ala-D-Ala)](n)-di-trans,octa-cis-undecaprenyl diphosphate + beta-D-GlcNAc-(1-&gt;4)-Mur2Ac(oyl-L-Ala-gamma-D-Glu-L-Lys-D-Ala-D-Ala)-di-trans,octa-cis-undecaprenyl diphosphate = [GlcNAc-(1-&gt;4)-Mur2Ac(oyl-L-Ala-gamma-D-Glu-L-Lys-D-Ala-D-Ala)](n+1)-di-trans,octa-cis-undecaprenyl diphosphate + di-trans,octa-cis-undecaprenyl diphosphate + H(+). It participates in cell wall biogenesis; peptidoglycan biosynthesis. In terms of biological role, peptidoglycan polymerase that catalyzes glycan chain elongation from lipid-linked precursors. This is Biosynthetic peptidoglycan transglycosylase from Nitrobacter hamburgensis (strain DSM 10229 / NCIMB 13809 / X14).